Here is a 524-residue protein sequence, read N- to C-terminus: Na(+)/H(+) antiporter NhaB (524 aa).

A run of 9 helical transmembrane segments spans residues 13-33 (FLGN…IINP), 98-118 (LLLV…LFVF), 140-160 (AFLS…SVSV), 239-259 (FFIR…LVCL), 304-324 (AIIG…VGLV), 325-345 (GLSV…HSLG), 358-378 (LTVF…TPII), 448-468 (ATPN…APLI), and 479-499 (ALPY…FLLV).

Belongs to the NhaB Na(+)/H(+) (TC 2.A.34) antiporter family.

The protein resides in the cell inner membrane. The enzyme catalyses 2 Na(+)(in) + 3 H(+)(out) = 2 Na(+)(out) + 3 H(+)(in). Na(+)/H(+) antiporter that extrudes sodium in exchange for external protons. This chain is Na(+)/H(+) antiporter NhaB, found in Yersinia pestis (strain Pestoides F).